The following is a 1264-amino-acid chain: Ubiquitin carboxyl-terminal hydrolase usp-48 (1264 aa).

The region spanning 108 to 430 (AGLINGGNFC…ACYGLLYRRR (323 aa)) is the USP domain. Cys-117 (nucleophile) is an active-site residue. Catalysis depends on His-366, which acts as the Proton acceptor. 3 disordered regions span residues 390–415 (IPKPPGTEKPTTAKTEKSRKKDKEKY), 522–610 (AKGE…IMDT), and 630–679 (TVEV…PVSS). Basic and acidic residues-rich tracts occupy residues 403 to 415 (KTEKSRKKDKEKY) and 532 to 543 (EASENEEKKKNE). A coiled-coil region spans residues 516–547 (AQEYEVAKGEKKKKKKEASENEEKKKNEEDEA). Residues 565 to 575 (SEPSTSAAATE) show a composition bias toward low complexity. 2 stretches are compositionally biased toward polar residues: residues 587–599 (ETPNPENAESTQV) and 663–678 (NGTNGTNSSPQKQPVS).

This sequence belongs to the peptidase C19 family. Broadly expressed. Expressed in germline.

It localises to the nucleus. Its subcellular location is the chromosome. The catalysed reaction is Thiol-dependent hydrolysis of ester, thioester, amide, peptide and isopeptide bonds formed by the C-terminal Gly of ubiquitin (a 76-residue protein attached to proteins as an intracellular targeting signal).. Recognizes and hydrolyzes the peptide bond at the C-terminal Gly of ubiquitin. Involved in the processing of poly-ubiquitin precursors as well as that of ubiquitinated proteins. Required post-developmentally to restrict the plasticity of epidermal cells, probably by regulating gene expression. The chain is Ubiquitin carboxyl-terminal hydrolase usp-48 from Caenorhabditis elegans.